The sequence spans 368 residues: 2-aminoethylphosphonate--pyruvate transaminase (368 aa).

N6-(pyridoxal phosphate)lysine is present on lysine 192.

This sequence belongs to the class-V pyridoxal-phosphate-dependent aminotransferase family. PhnW subfamily. Homodimer. The cofactor is pyridoxal 5'-phosphate.

The enzyme catalyses (2-aminoethyl)phosphonate + pyruvate = phosphonoacetaldehyde + L-alanine. Its function is as follows. Involved in phosphonate degradation. This is 2-aminoethylphosphonate--pyruvate transaminase from Pseudomonas entomophila (strain L48).